A 167-amino-acid polypeptide reads, in one-letter code: NAD(P)H-quinone oxidoreductase subunit I, chloroplastic (167 aa).

4Fe-4S ferredoxin-type domains follow at residues 55–84 (GRIH…VDWK) and 95–124 (LNYS…MTEE). [4Fe-4S] cluster contacts are provided by Cys64, Cys67, Cys70, Cys74, Cys104, Cys107, Cys110, and Cys114.

This sequence belongs to the complex I 23 kDa subunit family. In terms of assembly, NDH is composed of at least 16 different subunits, 5 of which are encoded in the nucleus. [4Fe-4S] cluster serves as cofactor.

Its subcellular location is the plastid. The protein localises to the chloroplast thylakoid membrane. It carries out the reaction a plastoquinone + NADH + (n+1) H(+)(in) = a plastoquinol + NAD(+) + n H(+)(out). It catalyses the reaction a plastoquinone + NADPH + (n+1) H(+)(in) = a plastoquinol + NADP(+) + n H(+)(out). Functionally, NDH shuttles electrons from NAD(P)H:plastoquinone, via FMN and iron-sulfur (Fe-S) centers, to quinones in the photosynthetic chain and possibly in a chloroplast respiratory chain. The immediate electron acceptor for the enzyme in this species is believed to be plastoquinone. Couples the redox reaction to proton translocation, and thus conserves the redox energy in a proton gradient. The sequence is that of NAD(P)H-quinone oxidoreductase subunit I, chloroplastic from Citrus sinensis (Sweet orange).